The sequence spans 115 residues: NADH-ubiquinone oxidoreductase chain 3 (115 aa).

3 helical membrane passes run leucine 4–leucine 24, phenylalanine 55–leucine 75, and isoleucine 84–tyrosine 104.

This sequence belongs to the complex I subunit 3 family. In terms of assembly, core subunit of respiratory chain NADH dehydrogenase (Complex I) which is composed of 45 different subunits. Interacts with TMEM186. Interacts with TMEM242.

It is found in the mitochondrion membrane. The enzyme catalyses a ubiquinone + NADH + 5 H(+)(in) = a ubiquinol + NAD(+) + 4 H(+)(out). Core subunit of the mitochondrial membrane respiratory chain NADH dehydrogenase (Complex I) that is believed to belong to the minimal assembly required for catalysis. Complex I functions in the transfer of electrons from NADH to the respiratory chain. The immediate electron acceptor for the enzyme is believed to be ubiquinone. This Onychomys leucogaster (Northern grasshopper mouse) protein is NADH-ubiquinone oxidoreductase chain 3.